A 211-amino-acid chain; its full sequence is Small ribosomal subunit protein uS3 (211 aa).

In terms of domain architecture, KH type-2 spans leucine 38–lysine 106.

The protein belongs to the universal ribosomal protein uS3 family. Part of the 30S ribosomal subunit. Forms a tight complex with proteins S10 and S14.

In terms of biological role, binds the lower part of the 30S subunit head. Binds mRNA in the 70S ribosome, positioning it for translation. The polypeptide is Small ribosomal subunit protein uS3 (Ehrlichia ruminantium (strain Gardel)).